A 341-amino-acid chain; its full sequence is MSNCKFTLAQLADHLDAQMVGDANYTVECIAPLESAGKNALSFLANSKYEKALATSQAGIMLLAQDSAEKFNGNKLIVKNPYLCYAKLSELFNFRLAKKQGVHPSATVDADATVAADAYIGPNCVIEAGAVIGGGTQLGAGCFVGADTKLGNNCLLHANVTLYAGVELGNKVLIHSGTVIGSDGFGFAPSAEGWVKIHQLGGVVIGNNVEIGSNTSIDRGALDDTIIEDGVIIDNLVHIAHNVKIGAGSAIAGCVGIAGSAVIGKNCTVAGMVAINGHITIADNTHFHGGTIVTKGVKESGAYASAPPMQEVSKWRRNAVRYGQLDEWVEKIKALQKAQKD.

Residue histidine 241 is the Proton acceptor of the active site.

It belongs to the transferase hexapeptide repeat family. LpxD subfamily. As to quaternary structure, homotrimer.

The enzyme catalyses a UDP-3-O-[(3R)-3-hydroxyacyl]-alpha-D-glucosamine + a (3R)-hydroxyacyl-[ACP] = a UDP-2-N,3-O-bis[(3R)-3-hydroxyacyl]-alpha-D-glucosamine + holo-[ACP] + H(+). It participates in bacterial outer membrane biogenesis; LPS lipid A biosynthesis. Its function is as follows. Catalyzes the N-acylation of UDP-3-O-acylglucosamine using 3-hydroxyacyl-ACP as the acyl donor. Is involved in the biosynthesis of lipid A, a phosphorylated glycolipid that anchors the lipopolysaccharide to the outer membrane of the cell. The protein is UDP-3-O-acylglucosamine N-acyltransferase of Saccharophagus degradans (strain 2-40 / ATCC 43961 / DSM 17024).